Here is a 490-residue protein sequence, read N- to C-terminus: N-succinylglutamate 5-semialdehyde dehydrogenase (490 aa).

224–229 (GSSPTG) is an NAD(+) binding site. Active-site residues include Glu247 and Cys281.

The protein belongs to the aldehyde dehydrogenase family. AstD subfamily.

It catalyses the reaction N-succinyl-L-glutamate 5-semialdehyde + NAD(+) + H2O = N-succinyl-L-glutamate + NADH + 2 H(+). It participates in amino-acid degradation; L-arginine degradation via AST pathway; L-glutamate and succinate from L-arginine: step 4/5. In terms of biological role, catalyzes the NAD-dependent reduction of succinylglutamate semialdehyde into succinylglutamate. The chain is N-succinylglutamate 5-semialdehyde dehydrogenase from Hahella chejuensis (strain KCTC 2396).